We begin with the raw amino-acid sequence, 383 residues long: Arginine biosynthesis bifunctional protein ArgJ (383 aa).

Substrate is bound by residues Thr-146, Lys-168, Thr-179, Glu-259, Asn-378, and Ser-383. The active-site Nucleophile is the Thr-179.

This sequence belongs to the ArgJ family. Heterotetramer of two alpha and two beta chains.

The protein resides in the cytoplasm. It catalyses the reaction N(2)-acetyl-L-ornithine + L-glutamate = N-acetyl-L-glutamate + L-ornithine. It carries out the reaction L-glutamate + acetyl-CoA = N-acetyl-L-glutamate + CoA + H(+). Its pathway is amino-acid biosynthesis; L-arginine biosynthesis; L-ornithine and N-acetyl-L-glutamate from L-glutamate and N(2)-acetyl-L-ornithine (cyclic): step 1/1. The protein operates within amino-acid biosynthesis; L-arginine biosynthesis; N(2)-acetyl-L-ornithine from L-glutamate: step 1/4. In terms of biological role, catalyzes two activities which are involved in the cyclic version of arginine biosynthesis: the synthesis of N-acetylglutamate from glutamate and acetyl-CoA as the acetyl donor, and of ornithine by transacetylation between N(2)-acetylornithine and glutamate. The protein is Arginine biosynthesis bifunctional protein ArgJ of Streptomyces avermitilis (strain ATCC 31267 / DSM 46492 / JCM 5070 / NBRC 14893 / NCIMB 12804 / NRRL 8165 / MA-4680).